Here is a 29-residue protein sequence, read N- to C-terminus: Potassium channel toxin alpha-KTx 8.4 (29 aa).

Intrachain disulfides connect cysteine 3–cysteine 19, cysteine 6–cysteine 24, and cysteine 10–cysteine 26.

It belongs to the short scorpion toxin superfamily. Potassium channel inhibitor family. Alpha-KTx 08 subfamily. As to expression, expressed by the venom gland.

Its subcellular location is the secreted. Inhibits voltage-gated potassium channels. The protein is Potassium channel toxin alpha-KTx 8.4 of Leiurus hebraeus (Hebrew deathstalker scorpion).